We begin with the raw amino-acid sequence, 189 residues long: Glycerol-3-phosphate acyltransferase 1 (189 aa).

5 consecutive transmembrane segments (helical) span residues 12–32 (MQFLYLVASYLFGNILTAYIV), 61–81 (GYFVATFLGDAIKGAIVVSIA), 88–108 (FTFVMLTLLAVIMGHIYPMLF), 124–144 (IAFDYLIALTLVAVFIIFYLI), and 164–184 (ILYSYSIVTTILSALIIVLIL).

It belongs to the PlsY family. As to quaternary structure, probably interacts with PlsX.

The protein localises to the cell membrane. It carries out the reaction an acyl phosphate + sn-glycerol 3-phosphate = a 1-acyl-sn-glycero-3-phosphate + phosphate. Its pathway is lipid metabolism; phospholipid metabolism. Catalyzes the transfer of an acyl group from acyl-phosphate (acyl-PO(4)) to glycerol-3-phosphate (G3P) to form lysophosphatidic acid (LPA). This enzyme utilizes acyl-phosphate as fatty acyl donor, but not acyl-CoA or acyl-ACP. This Bacillus anthracis protein is Glycerol-3-phosphate acyltransferase 1.